Consider the following 688-residue polypeptide: Translation initiation factor IF-2 (688 aa).

Basic and acidic residues-rich tracts occupy residues 53–62 (GKEKSEKTKE) and 86–95 (KRDDKNEKVN). Residues 53 to 100 (GKEKSEKTKEEDDEIETTAKNPIKESMNNKKSNKRDDKNEKVNTENAE) are disordered. Residues 187–354 (KRSPIITVMG…MILLSSEILE (168 aa)) form the tr-type G domain. The G1 stretch occupies residues 196-203 (GHVDHGKT). 196–203 (GHVDHGKT) is a GTP binding site. The tract at residues 221-225 (GITQH) is G2. Residues 242-245 (DTPG) are G3. Residues 242–246 (DTPGH) and 296–299 (NKID) each bind GTP. Residues 296-299 (NKID) form a G4 region. The segment at 332-334 (SAH) is G5.

The protein belongs to the TRAFAC class translation factor GTPase superfamily. Classic translation factor GTPase family. IF-2 subfamily.

It is found in the cytoplasm. One of the essential components for the initiation of protein synthesis. Protects formylmethionyl-tRNA from spontaneous hydrolysis and promotes its binding to the 30S ribosomal subunits. Also involved in the hydrolysis of GTP during the formation of the 70S ribosomal complex. This is Translation initiation factor IF-2 from Clostridium botulinum (strain ATCC 19397 / Type A).